The primary structure comprises 447 residues: Transcription factor azf1 (447 aa).

Disordered regions lie at residues 125–155 (HNGA…NEVE) and 174–199 (QSPG…PQSY). The segment covering 127-139 (GASQQPPGAQSSS) has biased composition (low complexity). Positions 140 to 155 (NEEGAQGKSSSSNEVE) are enriched in polar residues. 4 consecutive C2H2-type zinc fingers follow at residues 225–249 (YACT…MRAH), 255–279 (FVCK…QRRH), 285–307 (FSCD…KITH), and 313–338 (FTCL…NKFH). Residues 377–447 (NKGIKGRGKD…EPYFIERQAH (71 aa)) form a disordered region. Positions 397-416 (PGSESRRRIEPLSSTDDKMR) are enriched in basic and acidic residues. The segment covering 421-431 (GDTSMYNGGSS) has biased composition (polar residues).

The protein resides in the nucleus. In terms of biological role, transcription factor that acts as a positive regulator of ochratoxin A (OTA) biosynthesis via controlling the expression of antioxidant genes and oxidative phosphorylation genes. This is Transcription factor azf1 from Aspergillus niger (strain ATCC MYA-4892 / CBS 513.88 / FGSC A1513).